Reading from the N-terminus, the 414-residue chain is Nuclear hormone receptor family member nhr-213 (414 aa).

A DNA-binding region (nuclear receptor) is located at residues 21–99 (IVLCKVCALS…LGMTPENVQF (79 aa)). 2 NR C4-type zinc fingers span residues 24–44 (CKVC…CRAC) and 62–82 (CKKG…CRLC). Positions 162–414 (SAAKKMNSLE…DFSDPDIFDC (253 aa)) constitute an NR LBD domain.

This sequence belongs to the nuclear hormone receptor family.

It is found in the nucleus. Orphan nuclear receptor. This chain is Nuclear hormone receptor family member nhr-213 (nhr-213), found in Caenorhabditis elegans.